Reading from the N-terminus, the 338-residue chain is Glyceraldehyde-3-phosphate dehydrogenase 2 (338 aa).

NAD(+) is bound by residues 12–13 (RI), aspartate 34, and arginine 79. Residues 150 to 152 (SCT), threonine 181, 210 to 211 (TG), and arginine 233 each bind D-glyceraldehyde 3-phosphate. Cysteine 151 serves as the catalytic Nucleophile. Residue asparagine 315 coordinates NAD(+).

It belongs to the glyceraldehyde-3-phosphate dehydrogenase family. In terms of assembly, homotetramer.

The protein resides in the cytoplasm. The enzyme catalyses D-glyceraldehyde 3-phosphate + phosphate + NAD(+) = (2R)-3-phospho-glyceroyl phosphate + NADH + H(+). The protein operates within carbohydrate degradation; glycolysis; pyruvate from D-glyceraldehyde 3-phosphate: step 1/5. This is Glyceraldehyde-3-phosphate dehydrogenase 2 (GPD2) from Mucor circinelloides f. lusitanicus (Mucor racemosus var. lusitanicus).